Here is a 401-residue protein sequence, read N- to C-terminus: MEKKKVVLAYSGGLDTSVAIKWLQEKNYDIIALCLDLGEGKDLAFVKEKALSVGAIKSYMIDVQEEFANEYALMAMQAHTLYEGKYPLVSALSRPLIAKKLVEIAEQEGATAVAHGCTGKGNDQVRFEVSIQALNPYLEVIAPVREWKWSREEEIAYAKENDVPIPINLDSPFSIDQNLWGRSNECGILEDPWAAPPEDAYEMTLALEDTPNKPEFVEIGFEAGVPTTLNGTAYPLSELIKTLNAFAGKHGVGRIDHVENRLVGIKSREVYECPAAMTLITAHKELEDLTLVKEVAHFKPMIEQKITELIYNGLWFSPLKQALHAFLQETQKNVTGMVRVKLFKGHAIVEGRKSEYSLYDEKLATYTAQDEFNHDAAVGFISLFGLPTKVYSQVNQKKVEA.

9–17 contributes to the ATP binding site; the sequence is AYSGGLDTS. L-citrulline is bound at residue Tyr86. Gly116 is an ATP binding site. 3 residues coordinate L-aspartate: Thr118, Asn122, and Asp123. Asn122 serves as a coordination point for L-citrulline. Positions 126, 174, 183, 259, and 271 each coordinate L-citrulline.

Belongs to the argininosuccinate synthase family. Type 1 subfamily. In terms of assembly, homotetramer.

The protein localises to the cytoplasm. The enzyme catalyses L-citrulline + L-aspartate + ATP = 2-(N(omega)-L-arginino)succinate + AMP + diphosphate + H(+). The protein operates within amino-acid biosynthesis; L-arginine biosynthesis; L-arginine from L-ornithine and carbamoyl phosphate: step 2/3. The chain is Argininosuccinate synthase from Bacillus cereus (strain AH187).